The chain runs to 1106 residues: MSSNNESIKNWVSDKIFDILGYRESTMVDYIIALSKKAKDVNSFISTLTEQDFPINSNTKSFAQELLNKSQQKIQNITSSSSSSSSTSLSSSSSSKDKEKEKIEFLKKNKSYKLVIDHDDDIVNSSGSSDSDSDSERKRKKKEKKKEKKDKKDKKDKKSSTRKKSDNNWDDEIEPEPIKPNEKEDENNNNENNDNNNDNNNLQKRQPYKSIIEEENNNDNNNNNGEEDEYEREQREVKELSDRIKKRDEKSTKKKIVDDSETKESIERKNRLEQNEQLETERTKSRRKYLVGEEQKRLILLKREIEEEYELFKDQKLTEQEIKDFEKKKKLYELASQRINESQQSDDYYQLPSEIKDKDSLLKSSYINDNKNKKGNDSSSSSSYNPEQKEWEQNRMKSAISENRGLSTANIGGGNEEYEYVFEDQIEFIKEEVLKQGQKGDGVMILKPGDDGSAQAKMTIQEVRKSLPVYPYREQLIDAVREYQVLIIVGETGSGKTTQIPQYLHEAGFSKTGKIGCTQPRRVAAMSVAARVAEEVGCKLGNEVGYSIRFEDCTSQKTVLQYMTDGMLVREFLTAPDLASYSVLIIDEAHERTLHTDILFGLLKDITRFRPDLKLLISSATMDAERFSDYFDGAPTFNIPGRKYEVTTHYTQAPEADYLDAAVVTVLQIHITEPLGDILVFLTGQEEVDQAAEMLQTRTRGLGTKIKELIITRIYSTLPTDLQAKIFEPTPPNARKVVLATNIAETSLTIDGIIYVIDPGFCKQKMFNPRTGMESLVITPVSRASANQRKGRAGRVAPGKCFRLFTAWAFDNELEENTIPEIQRTNLGNVVLLLKSMGINDLMNFDFMDPPPAQTLIAALEQLYALGALNDRGQLTKLGRKMAEFPVDPQLSKMIIASEKYKCSEEILTICAMLSVGNTIFYRPKDKAFAADAARKLFFHPQGDHLTLMNVFNQWRESGYAVQWCFENFIQHRSMKRAQDVRDQLELLLERVEIPLVSNVDDTDSIRKCIASGFFYNSAKLEKSGLFRTTKHNQSVQIHPSSCLFQSPPKWVVYHELVLTTKEFMRQIVEIQSSWLHEIAPHIYKEKDVNDNQKLPKNIGKKQINK.

Disordered stretches follow at residues 73–100, 120–286, and 366–394; these read KIQN…DKEK, DDIV…TKSR, and YIND…WEQN. Low complexity predominate over residues 78–94; that stretch reads TSSSSSSSSTSLSSSSS. Residues 138–155 show a composition bias toward basic residues; that stretch reads KRKKKEKKKEKKDKKDKK. Positions 156 to 167 are enriched in basic and acidic residues; sequence DKKSSTRKKSDN. Residues 189-201 are compositionally biased toward low complexity; sequence NNENNDNNNDNNN. Basic and acidic residues predominate over residues 232 to 283; it reads REQREVKELSDRIKKRDEKSTKKKIVDDSETKESIERKNRLEQNEQLETERT. Residues 477–640 form the Helicase ATP-binding domain; sequence IDAVREYQVL…FDGAPTFNIP (164 aa). 490–497 serves as a coordination point for ATP; it reads GETGSGKT. The DEAH box signature appears at 587 to 590; it reads DEAH. The 174-residue stretch at 665–838 folds into the Helicase C-terminal domain; sequence TVLQIHITEP…NVVLLLKSMG (174 aa).

Belongs to the DEAD box helicase family. DEAH subfamily. DDX16/PRP8 sub-subfamily. In terms of assembly, component of pre-catalytic spliceosome complexes.

The protein localises to the nucleus. The protein resides in the nucleoplasm. It catalyses the reaction ATP + H2O = ADP + phosphate + H(+). Its function is as follows. Required for pre-mRNA splicing as component of the spliceosome. Contributes to pre-mRNA splicing after spliceosome formation and prior to the first transesterification reaction. The protein is Putative pre-mRNA-splicing factor ATP-dependent RNA helicase DHX16 (dhx16) of Dictyostelium discoideum (Social amoeba).